Here is a 482-residue protein sequence, read N- to C-terminus: 3-isopropylmalate dehydratase large subunit (482 aa).

Residues Cys-353, Cys-414, and Cys-417 each coordinate [4Fe-4S] cluster.

Belongs to the aconitase/IPM isomerase family. LeuC type 1 subfamily. In terms of assembly, heterodimer of LeuC and LeuD. It depends on [4Fe-4S] cluster as a cofactor.

The enzyme catalyses (2R,3S)-3-isopropylmalate = (2S)-2-isopropylmalate. The protein operates within amino-acid biosynthesis; L-leucine biosynthesis; L-leucine from 3-methyl-2-oxobutanoate: step 2/4. Functionally, catalyzes the isomerization between 2-isopropylmalate and 3-isopropylmalate, via the formation of 2-isopropylmaleate. This is 3-isopropylmalate dehydratase large subunit from Xanthomonas oryzae pv. oryzae (strain MAFF 311018).